Consider the following 275-residue polypeptide: Elongation factor Ts (275 aa).

The involved in Mg(2+) ion dislocation from EF-Tu stretch occupies residues 80-83 (TDFV).

This sequence belongs to the EF-Ts family.

It is found in the cytoplasm. Its function is as follows. Associates with the EF-Tu.GDP complex and induces the exchange of GDP to GTP. It remains bound to the aminoacyl-tRNA.EF-Tu.GTP complex up to the GTP hydrolysis stage on the ribosome. This is Elongation factor Ts from Clavibacter sepedonicus (Clavibacter michiganensis subsp. sepedonicus).